The chain runs to 69 residues: Large ribosomal subunit protein uL29 (69 aa).

This sequence belongs to the universal ribosomal protein uL29 family.

The chain is Large ribosomal subunit protein uL29 from Rhodopseudomonas palustris (strain TIE-1).